The sequence spans 128 residues: Protein yippee-like At3g08990 (128 aa).

The 98-residue stretch at Leu-12 to Tyr-109 folds into the Yippee domain. Zn(2+)-binding residues include Cys-16, Cys-19, Cys-72, and Cys-75.

The protein belongs to the yippee family.

This is Protein yippee-like At3g08990 from Arabidopsis thaliana (Mouse-ear cress).